The primary structure comprises 722 residues: MSSARTPLPTLNERDTEQPTLGHLDSKPSSKSNMLRGRNSATSADEQPHIGNYRLLKTIGKGNFAKVKLARHILTGKEVAVKIIDKTQLNSSSLQKLFREVRIMKVLNHPNIVKLFEVIETEKTLYLVMEYASGGEVFDYLVAHGRMKEKEARAKFRQIVSAVQYCHQKFIVHRDLKAENLLLDADMNIKIADFGFSNEFTFGNKLDTFCGSPPYAAPELFQGKKYDGPEVDVWSLGVILYTLVSGSLPFDGQNLKELRERVLRGKYRIPFYMSTDCENLLKKFLILNPSKRGTLEQIMKDRWMNVGHEDDELKPYVEPLPDYKDPRRTELMVSMGYTREEIQDSLVGQRYNEVMATYLLLGYKSSELEGDTITLKPRPSADLTNSSAPSPSHKVQRSVSANPKQRRSSDQAVPAIPTSNSYSKKTQSNNAENKRPEEETGRKASSTAKVPASPLPGLDRKKTTPTPSTNSVLSTSTNRSRNSPLLDRASLGQASIQNGKDSTAPQRVPVASPSAHNISSSSGAPDRTNFPRGVSSRSTFHAGQLRQVRDQQNLPFGVTPASPSGHSQGRRGASGSIFSKFTSKFVRRNLNEPESKDRVETLRPHVVGGGGTDKEKEEFREAKPRSLRFTWSMKTTSSMEPNEMMREIRKVLDANSCQSELHERYMLLCVHGTPGHENFVQWEMEVCKLPRLSLNGVRFKRISGTSMAFKNIASKIANELKL.

The segment at 1-46 (MSSARTPLPTLNERDTEQPTLGHLDSKPSSKSNMLRGRNSATSADE) is disordered. The span at 27–45 (KPSSKSNMLRGRNSATSAD) shows a compositional bias: polar residues. Serine 40 is modified (phosphoserine). The Protein kinase domain maps to 53 to 304 (YRLLKTIGKG…LEQIMKDRWM (252 aa)). The residue at position 58 (threonine 58) is a Phosphothreonine; by autocatalysis. ATP-binding positions include 59 to 67 (IGKGNFAKV) and lysine 82. A phosphoserine; by CaMK1 mark is found at serine 91, serine 92, and serine 93. Aspartate 175 acts as the Proton acceptor in catalysis. Threonine 208 bears the Phosphothreonine; by LKB1 and TAOK1 mark. The residue at position 212 (serine 212) is a Phosphoserine; by GSK3-beta. Position 274 is a phosphoserine; by autocatalysis (serine 274). Threonine 275 is subject to Phosphothreonine; by autocatalysis. Residue threonine 294 is modified to Phosphothreonine; by CaMK1. Residues 323 to 362 (YKDPRRTELMVSMGYTREEIQDSLVGQRYNEVMATYLLLG) form the UBA domain. The interval 373–576 (ITLKPRPSAD…SQGRRGASGS (204 aa)) is disordered. 2 positions are modified to phosphoserine: serine 408 and serine 409. Over residues 417-431 (PTSNSYSKKTQSNNA) the composition is skewed to polar residues. A compositionally biased stretch (basic and acidic residues) spans 432–442 (ENKRPEEETGR). Serine 453 carries the post-translational modification Phosphoserine. Threonine 464 carries the post-translational modification Phosphothreonine. The span at 464 to 483 (TPTPSTNSVLSTSTNRSRNS) shows a compositional bias: polar residues. Phosphoserine is present on residues serine 483 and serine 490. Residues 492–505 (GQASIQNGKDSTAP) show a composition bias toward polar residues. The span at 511 to 524 (ASPSAHNISSSSGA) shows a compositional bias: low complexity. 3 positions are modified to phosphoserine: serine 512, serine 514, and serine 535. Threonine 539 is subject to Phosphothreonine; by PKC/PRKCZ. Residues serine 562 and serine 656 each carry the phosphoserine modification. Residues 673–722 (TPGHENFVQWEMEVCKLPRLSLNGVRFKRISGTSMAFKNIASKIANELKL) enclose the KA1 domain.

It belongs to the protein kinase superfamily. CAMK Ser/Thr protein kinase family. SNF1 subfamily. In terms of assembly, homodimer. Interacts (when phosphorylated at Thr-539) with YWHAZ. Interacts with MTCL1; the interaction is direct and increases MARK2 microtubule-binding ability. Interacts with PAK5; leading to inhibit the protein kinase activity. Interacts with MAPT/TAU. Interacts with YWHAB, YWHAG and YWHAQ. Mg(2+) is required as a cofactor. In terms of processing, autophosphorylated. Phosphorylated at Thr-208 by STK11/LKB1 in complex with STE20-related adapter-alpha (STRADA) pseudo kinase and CAB39. Phosphorylation at Thr-208 by TAOK1 activates the kinase activity, leading to phosphorylation and detachment of MAPT/TAU from microtubules. Phosphorylation at Ser-212 by GSK3-beta (GSK3B) inhibits the kinase activity. Phosphorylation by CaMK1 promotes activity and is required to promote neurite outgrowth. Phosphorylation at Thr-539 by PRKCZ/aPKC in polarized epithelial cells inhibits the kinase activity and promotes binding to 14-3-3 protein YWHAZ, leading to relocation from cell membrane to cytoplasm.

The protein localises to the cell membrane. Its subcellular location is the lateral cell membrane. It is found in the cytoplasm. The protein resides in the cytoskeleton. It localises to the cell projection. The protein localises to the dendrite. The enzyme catalyses L-seryl-[protein] + ATP = O-phospho-L-seryl-[protein] + ADP + H(+). The catalysed reaction is L-threonyl-[protein] + ATP = O-phospho-L-threonyl-[protein] + ADP + H(+). It catalyses the reaction L-seryl-[tau protein] + ATP = O-phospho-L-seryl-[tau protein] + ADP + H(+). It carries out the reaction L-threonyl-[tau protein] + ATP = O-phospho-L-threonyl-[tau protein] + ADP + H(+). Its activity is regulated as follows. Inhibited by hymenialdisine. Activated by phosphorylation on Thr-208 by STK11/LKB1 and TAOK1. Inhibited by phosphorylation at Ser-212 or Thr-539. Inhibited by PAK5; inhibition is independent of the kinase activity of PAK5. Functionally, serine/threonine-protein kinase. Involved in cell polarity and microtubule dynamics regulation. Phosphorylates CRTC2/TORC2, DCX, HDAC7, KIF13B, MAP2, MAP4 and RAB11FIP2. Phosphorylates the microtubule-associated protein MAPT/TAU. Plays a key role in cell polarity by phosphorylating the microtubule-associated proteins MAP2, MAP4 and MAPT/TAU at KXGS motifs, causing detachment from microtubules, and their disassembly. Regulates epithelial cell polarity by phosphorylating RAB11FIP2. Involved in the regulation of neuronal migration through its dual activities in regulating cellular polarity and microtubule dynamics, possibly by phosphorylating and regulating DCX. Regulates axogenesis by phosphorylating KIF13B, promoting interaction between KIF13B and 14-3-3 and inhibiting microtubule-dependent accumulation of KIF13B. Also required for neurite outgrowth and establishment of neuronal polarity. Regulates localization and activity of some histone deacetylases by mediating phosphorylation of HDAC7, promoting subsequent interaction between HDAC7 and 14-3-3 and export from the nucleus. Also acts as a positive regulator of the Wnt signaling pathway, probably by mediating phosphorylation of dishevelled proteins (DVL1, DVL2 and/or DVL3). Modulates the developmental decision to build a columnar versus a hepatic epithelial cell apparently by promoting a switch from a direct to a transcytotic mode of apical protein delivery. Essential for the asymmetric development of membrane domains of polarized epithelial cells. This is Serine/threonine-protein kinase MARK2 from Rattus norvegicus (Rat).